The following is a 242-amino-acid chain: Biosynthetic peptidoglycan transglycosylase (242 aa).

Residues 19-39 (LLLACAVLWGGGVALFSIVPV) traverse the membrane as a helical segment.

It belongs to the glycosyltransferase 51 family.

It localises to the cell inner membrane. It carries out the reaction [GlcNAc-(1-&gt;4)-Mur2Ac(oyl-L-Ala-gamma-D-Glu-L-Lys-D-Ala-D-Ala)](n)-di-trans,octa-cis-undecaprenyl diphosphate + beta-D-GlcNAc-(1-&gt;4)-Mur2Ac(oyl-L-Ala-gamma-D-Glu-L-Lys-D-Ala-D-Ala)-di-trans,octa-cis-undecaprenyl diphosphate = [GlcNAc-(1-&gt;4)-Mur2Ac(oyl-L-Ala-gamma-D-Glu-L-Lys-D-Ala-D-Ala)](n+1)-di-trans,octa-cis-undecaprenyl diphosphate + di-trans,octa-cis-undecaprenyl diphosphate + H(+). It participates in cell wall biogenesis; peptidoglycan biosynthesis. Functionally, peptidoglycan polymerase that catalyzes glycan chain elongation from lipid-linked precursors. This Klebsiella oxytoca protein is Biosynthetic peptidoglycan transglycosylase.